A 562-amino-acid polypeptide reads, in one-letter code: Matrix metalloproteinase-25 (562 aa).

An N-terminal signal peptide occupies residues 1–21 (MRLRLRLLALLLLLLAPPARA). A propeptide spanning residues 22–107 (PKPSAQDVSL…VAGLVRRRRR (86 aa)) is cleaved from the precursor. The short motif at 88–95 (PRCSLPDV) is the Cysteine switch element. 2 residues coordinate Zn(2+): C90 and H233. E234 is a catalytic residue. H237 and H243 together coordinate Zn(2+). The disordered stretch occupies residues 278–313 (LYGKAPQTPYDKPTRKPLAPPPQPPASPTHSPSFPI). Pro residues predominate over residues 295 to 304 (LAPPPQPPAS). Hemopexin repeat units follow at residues 314–363 (PDRC…WEGL), 367–412 (VRVV…GLPP), 413–461 (GEEV…EGAP), and 462–508 (PSPD…WLDC). C317 and C508 are joined by a disulfide. A disordered region spans residues 490-526 (SIKTEPDAPQPMGPNWLDCPAPSSGPRAPRPPKATPV). A539 is lipidated: GPI-anchor amidated alanine. The propeptide at 540–562 (AGRWPAPIPLLLLPLLVGGVASR) is removed in mature form.

This sequence belongs to the peptidase M10A family. Zn(2+) is required as a cofactor. Ca(2+) serves as cofactor. The precursor is cleaved by a furin endopeptidase. As to expression, expressed predominantly in leukocytes, lung and spleen. Expressed also in colon carcinoma, astrocytoma and glioblastomas.

Its subcellular location is the cell membrane. The protein resides in the secreted. It localises to the extracellular space. The protein localises to the extracellular matrix. In terms of biological role, may activate progelatinase A. The polypeptide is Matrix metalloproteinase-25 (MMP25) (Homo sapiens (Human)).